The primary structure comprises 260 residues: CD40 ligand (260 aa).

The Cytoplasmic portion of the chain corresponds to 1-22; that stretch reads MIETYSQTAPRSVATGPPVSMK. The helical; Signal-anchor for type II membrane protein transmembrane segment at 23-46 threads the bilayer; sequence IFMYLLTVFLITQMIGSALFAVYL. Over 47-260 the chain is Extracellular; sequence HRRLDKIEDE…GFTSFGLLKL (214 aa). The region spanning 121 to 260 is the THD domain; sequence IAAHVISEAS…GFTSFGLLKL (140 aa). Cysteines 177 and 217 form a disulfide. The N-linked (GlcNAc...) asparagine glycan is linked to Asn239.

It belongs to the tumor necrosis factor family. As to quaternary structure, homotrimer. Interacts with CD28. CD40 ligand, soluble form: Exists as either a monomer or a homotrimer. Forms a ternary complex between CD40 and integrins for CD40-CD40LG signaling. Post-translationally, the soluble form derives from the membrane form by proteolytic processing.

It is found in the cell membrane. It localises to the cell surface. Its subcellular location is the secreted. In terms of biological role, cytokine that acts as a ligand to CD40/TNFRSF5. Costimulates T-cell proliferation and cytokine production. Its cross-linking on T-cells generates a costimulatory signal which enhances the production of IL4 and IL10 in conjunction with the TCR/CD3 ligation and CD28 costimulation. Induces the activation of NF-kappa-B. Induces the activation of kinases MAPK8 and PAK2 in T-cells. Mediates B-cell proliferation in the absence of co-stimulus as well as IgE production in the presence of IL4. Involved in immunoglobulin class switching. Its function is as follows. Acts as a ligand for integrins, specifically ITGA5:ITGB1 and ITGAV:ITGB3; both integrins and the CD40 receptor are required for activation of CD40-CD40LG signaling, which have cell-type dependent effects, such as B-cell activation, NF-kappa-B signaling and anti-apoptotic signaling. This chain is CD40 ligand (CD40LG), found in Canis lupus familiaris (Dog).